The following is a 602-amino-acid chain: uncharacterized protein (602 aa).

The MCM domain maps to 271–472 (IIDILADILI…RDEEVAKYIF (202 aa)). 315–322 (TEVGIDKT) contacts ATP.

Belongs to the MCM family.

This is an uncharacterized protein from Methanocaldococcus jannaschii (strain ATCC 43067 / DSM 2661 / JAL-1 / JCM 10045 / NBRC 100440) (Methanococcus jannaschii).